Reading from the N-terminus, the 341-residue chain is Holliday junction branch migration complex subunit RuvB (341 aa).

A large ATPase domain (RuvB-L) region spans residues 1-180 (MAKSHTLNPE…FGIQLRLDYY (180 aa)). Residues Leu-19, Arg-20, Gly-61, Lys-64, Thr-65, Thr-66, Arg-170, Tyr-180, and Arg-217 each contribute to the ATP site. Residue Thr-65 coordinates Mg(2+). The interval 181 to 251 (NDEEMKEIVL…LCLKAFEKMG (71 aa)) is small ATPAse domain (RuvB-S). The tract at residues 254–341 (DLGLDGMDRQ…ENHGQDPTLF (88 aa)) is head domain (RuvB-H). Positions 309 and 314 each coordinate DNA.

The protein belongs to the RuvB family. In terms of assembly, homohexamer. Forms an RuvA(8)-RuvB(12)-Holliday junction (HJ) complex. HJ DNA is sandwiched between 2 RuvA tetramers; dsDNA enters through RuvA and exits via RuvB. An RuvB hexamer assembles on each DNA strand where it exits the tetramer. Each RuvB hexamer is contacted by two RuvA subunits (via domain III) on 2 adjacent RuvB subunits; this complex drives branch migration. In the full resolvosome a probable DNA-RuvA(4)-RuvB(12)-RuvC(2) complex forms which resolves the HJ.

The protein localises to the cytoplasm. It carries out the reaction ATP + H2O = ADP + phosphate + H(+). Functionally, the RuvA-RuvB-RuvC complex processes Holliday junction (HJ) DNA during genetic recombination and DNA repair, while the RuvA-RuvB complex plays an important role in the rescue of blocked DNA replication forks via replication fork reversal (RFR). RuvA specifically binds to HJ cruciform DNA, conferring on it an open structure. The RuvB hexamer acts as an ATP-dependent pump, pulling dsDNA into and through the RuvAB complex. RuvB forms 2 homohexamers on either side of HJ DNA bound by 1 or 2 RuvA tetramers; 4 subunits per hexamer contact DNA at a time. Coordinated motions by a converter formed by DNA-disengaged RuvB subunits stimulates ATP hydrolysis and nucleotide exchange. Immobilization of the converter enables RuvB to convert the ATP-contained energy into a lever motion, pulling 2 nucleotides of DNA out of the RuvA tetramer per ATP hydrolyzed, thus driving DNA branch migration. The RuvB motors rotate together with the DNA substrate, which together with the progressing nucleotide cycle form the mechanistic basis for DNA recombination by continuous HJ branch migration. Branch migration allows RuvC to scan DNA until it finds its consensus sequence, where it cleaves and resolves cruciform DNA. In Leptospira borgpetersenii serovar Hardjo-bovis (strain L550), this protein is Holliday junction branch migration complex subunit RuvB.